Consider the following 287-residue polypeptide: METAAGSERRSTPGPAVPPPPRGHAPLATASGPLSSPAREPPQPEEERQLRISESGQFSDGLEDRGLLESSTRLKPHEAQNYRKKALWVSWFSIIVTLALAVAAFTVSVMRYSASAFGFAFDAILDVLSSAIVLWRYSNAAAVHSAHREYIACVILGVIFLLSSVCIVVKAIHDLSTKLLPEVDDFLFSVSILSGILCSILAVLKFMLGKVLTSRALITDGFNSLVGGVMGFSILLSAEVFKHNSAVWYLDGSIGVLIGLTIFAYGVKLLIDMVPRVRQTRHYEMFE.

Positions 1-63 (METAAGSERR…ESGQFSDGLE (63 aa)) are disordered. Residues 1-86 (METAAGSERR…HEAQNYRKKA (86 aa)) are Cytoplasmic-facing. 4 positions are modified to phosphoserine: Ser-11, Ser-53, Ser-55, and Ser-59. The interval 40 to 70 (EPPQPEEERQLRISESGQFSDGLEDRGLLES) is required for interaction with MCOLN1. Residues 87–107 (LWVSWFSIIVTLALAVAAFTV) form a helical membrane-spanning segment. The Extracellular portion of the chain corresponds to 108 to 114 (SVMRYSA). A helical membrane pass occupies residues 115-135 (SAFGFAFDAILDVLSSAIVLW). The Cytoplasmic segment spans residues 136-148 (RYSNAAAVHSAHR). Residues 149-169 (EYIACVILGVIFLLSSVCIVV) form a helical membrane-spanning segment. Residues 170–185 (KAIHDLSTKLLPEVDD) are Extracellular-facing. Residues 186 to 206 (FLFSVSILSGILCSILAVLKF) traverse the membrane as a helical segment. The Cytoplasmic portion of the chain corresponds to 207–215 (MLGKVLTSR). A helical membrane pass occupies residues 216–236 (ALITDGFNSLVGGVMGFSILL). At 237-253 (SAEVFKHNSAVWYLDGS) the chain is on the extracellular side. Residues 254–274 (IGVLIGLTIFAYGVKLLIDMV) traverse the membrane as a helical segment. The Cytoplasmic segment spans residues 275 to 287 (PRVRQTRHYEMFE).

This sequence belongs to the TMEM163 family. In terms of assembly, homodimer. Interacts with MCOLN1/TRPML1. Interacts with SLC30A1, SLC30A2, SLC30A3 and SLC30A4.

The protein resides in the cytoplasmic vesicle. The protein localises to the secretory vesicle. It is found in the synaptic vesicle membrane. Its subcellular location is the early endosome membrane. It localises to the late endosome membrane. The protein resides in the lysosome membrane. The protein localises to the cell membrane. The catalysed reaction is Zn(2+)(in) = Zn(2+)(out). Zinc ion transporter that mediates zinc efflux and plays a crucial role in intracellular zinc homeostasis. Binds the divalent cations Zn(2+), Ni(2+), and to a minor extent Cu(2+). Is a functional modulator of P2X purinoceptors, including P2RX1, P2RX3, P2RX4 and P2RX7. Plays a role in central nervous system development and is required for myelination, and survival and proliferation of oligodendrocytes. In Bos taurus (Bovine), this protein is Transmembrane protein 163 (TMEM163).